A 708-amino-acid chain; its full sequence is Fatty acid oxidation complex subunit alpha (708 aa).

The interval M1–P190 is enoyl-CoA hydratase. Residues D310–Q708 are 3-hydroxyacyl-CoA dehydrogenase.

In the N-terminal section; belongs to the enoyl-CoA hydratase/isomerase family. The protein in the central section; belongs to the 3-hydroxyacyl-CoA dehydrogenase family. Heterotetramer of two alpha chains (FadJ) and two beta chains (FadI).

It is found in the cytoplasm. It catalyses the reaction a (3S)-3-hydroxyacyl-CoA = a (2E)-enoyl-CoA + H2O. The catalysed reaction is a 4-saturated-(3S)-3-hydroxyacyl-CoA = a (3E)-enoyl-CoA + H2O. It carries out the reaction a (3S)-3-hydroxyacyl-CoA + NAD(+) = a 3-oxoacyl-CoA + NADH + H(+). The enzyme catalyses (3S)-3-hydroxybutanoyl-CoA = (3R)-3-hydroxybutanoyl-CoA. It participates in lipid metabolism; fatty acid beta-oxidation. Its function is as follows. Catalyzes the formation of a hydroxyacyl-CoA by addition of water on enoyl-CoA. Also exhibits 3-hydroxyacyl-CoA epimerase and 3-hydroxyacyl-CoA dehydrogenase activities. The polypeptide is Fatty acid oxidation complex subunit alpha (Idiomarina loihiensis (strain ATCC BAA-735 / DSM 15497 / L2-TR)).